The sequence spans 215 residues: Large ribosomal subunit protein uL3 (215 aa).

The interval 136–155 is disordered; the sequence is GVSISHRSHGSTGQRQDPGK. The residue at position 151 (Gln151) is an N5-methylglutamine.

This sequence belongs to the universal ribosomal protein uL3 family. As to quaternary structure, part of the 50S ribosomal subunit. Forms a cluster with proteins L14 and L19. In terms of processing, methylated by PrmB.

Its function is as follows. One of the primary rRNA binding proteins, it binds directly near the 3'-end of the 23S rRNA, where it nucleates assembly of the 50S subunit. This Rickettsia felis (strain ATCC VR-1525 / URRWXCal2) (Rickettsia azadi) protein is Large ribosomal subunit protein uL3.